We begin with the raw amino-acid sequence, 828 residues long: Beta-galactosidase (828 aa).

The signal sequence occupies residues 1-20 (MKMKQFNLLSLFLILITSFG). N-linked (GlcNAc...) asparagine glycans are attached at residues Asn23 and Asn153. Glu183 (proton donor) is an active-site residue. Glu252 (nucleophile) is an active-site residue. Residues Asn253, Asn350, Asn379, Asn492, Asn667, Asn799, and Asn803 are each glycosylated (N-linked (GlcNAc...) asparagine). The region spanning 742-828 (AHEHNKVELS…PKRLFVEVEC (87 aa)) is the SUEL-type lectin domain.

Belongs to the glycosyl hydrolase 35 family.

Its subcellular location is the secreted. It localises to the extracellular space. It is found in the apoplast. It carries out the reaction Hydrolysis of terminal non-reducing beta-D-galactose residues in beta-D-galactosides.. This chain is Beta-galactosidase, found in Brassica oleracea (Wild cabbage).